We begin with the raw amino-acid sequence, 414 residues long: 3-oxoacyl-[acyl-carrier-protein] synthase 2 (414 aa).

A Ketosynthase family 3 (KS3) domain is found at 4-411 (NKRVVITGMG…GHNAVLVFKK (408 aa)). Active-site for beta-ketoacyl synthase activity residues include Cys165, His304, and His341.

The protein belongs to the thiolase-like superfamily. Beta-ketoacyl-ACP synthases family.

The enzyme catalyses a fatty acyl-[ACP] + malonyl-[ACP] + H(+) = a 3-oxoacyl-[ACP] + holo-[ACP] + CO2. It catalyses the reaction (9Z)-hexadecenoyl-[ACP] + malonyl-[ACP] + H(+) = 3-oxo-(11Z)-octadecenoyl-[ACP] + holo-[ACP] + CO2. It participates in lipid metabolism; fatty acid biosynthesis. Its function is as follows. Involved in the type II fatty acid elongation cycle. Catalyzes the elongation of a wide range of acyl-ACP by the addition of two carbons from malonyl-ACP to an acyl acceptor. Can efficiently catalyze the conversion of palmitoleoyl-ACP (cis-hexadec-9-enoyl-ACP) to cis-vaccenoyl-ACP (cis-octadec-11-enoyl-ACP), an essential step in the thermal regulation of fatty acid composition. In Staphylococcus aureus (strain MW2), this protein is 3-oxoacyl-[acyl-carrier-protein] synthase 2 (fabF).